Reading from the N-terminus, the 208-residue chain is Small ribosomal subunit protein uS4 (208 aa).

An S4 RNA-binding domain is found at 98–158; the sequence is CRLDTVSYRM…EKAKNHLRIK (61 aa).

It belongs to the universal ribosomal protein uS4 family. Part of the 30S ribosomal subunit. Contacts protein S5. The interaction surface between S4 and S5 is involved in control of translational fidelity.

One of the primary rRNA binding proteins, it binds directly to 16S rRNA where it nucleates assembly of the body of the 30S subunit. Functionally, with S5 and S12 plays an important role in translational accuracy. This chain is Small ribosomal subunit protein uS4, found in Nitrosospira multiformis (strain ATCC 25196 / NCIMB 11849 / C 71).